We begin with the raw amino-acid sequence, 158 residues long: Antitoxin TacA (158 aa).

It belongs to the TacA antitoxin family. Forms a complex with cognate toxin TacT.

Functionally, antitoxin component of a type II toxin-antitoxin (TA) system. Counteracts the toxic effect of cognate toxin TacT. TacA-TacT both represses and derepresses expression of its own operon. In Mycobacterium tuberculosis (strain ATCC 25618 / H37Rv), this protein is Antitoxin TacA.